A 238-amino-acid chain; its full sequence is Uridylate kinase (238 aa).

12–15 (KLSG) provides a ligand contact to ATP. G54 is a binding site for UMP. ATP contacts are provided by G55 and R59. UMP contacts are provided by residues D74 and 135-142 (TGNPFFTT). ATP is bound by residues T162, Y168, and D171.

This sequence belongs to the UMP kinase family. Homohexamer.

It is found in the cytoplasm. It catalyses the reaction UMP + ATP = UDP + ADP. Its pathway is pyrimidine metabolism; CTP biosynthesis via de novo pathway; UDP from UMP (UMPK route): step 1/1. Its activity is regulated as follows. Inhibited by UTP. In terms of biological role, catalyzes the reversible phosphorylation of UMP to UDP. The polypeptide is Uridylate kinase (Bordetella avium (strain 197N)).